The following is a 67-amino-acid chain: Alpha-actitoxin-Ms11a-3 (67 aa).

The first 24 residues, 1 to 24 (MASKIFFVLAVFLVMSAVLPESFA), serve as a signal peptide directing secretion. 3 disulfide bridges follow: Cys26-Cys41, Cys33-Cys46, and Cys40-Cys61. At Lys66 the chain carries Lysine amide.

It localises to the secreted. Its subcellular location is the nematocyst. Its function is as follows. Alpha-toxins act on postsynaptic membranes, they bind to the nicotinic acetylcholine receptors (nAChR) and thus inhibit them. This toxin shows inhibition against mouse alpha-1-beta-1-delta-epsilon (CHRNA1-CHRNB1-CHRND-CHRNE) (IC(50)=1215 nM), rat alpha-3-beta-4/CHRNA3-CHRNB4 (IC(50)=5.173 uM), rat alpha-7/CHRNA7 (IC(50)=4.786 uM), human alpha-7/CHRNA7 (IC(50)=8.869 uM), and rat alpha-9-alpha-10/CHRNA9-CHRNA10 (IC(50)=202 nM). Also competes with alpha-bungarotoxin for binding to orthosteric sites on muscle-type T.carlifornicus (IC(50)=256 nM) and human alpha-7/CHRNA7 nAChRs (IC(50)=19.81 uM). The polypeptide is Alpha-actitoxin-Ms11a-3 (Metridium senile (Brown sea anemone)).